A 350-amino-acid chain; its full sequence is Serine-threonine kinase receptor-associated protein (350 aa).

WD repeat units follow at residues 12–56, 57–96, 98–137, 141–179, 180–212, 221–262, and 263–302; these read GHTR…GTFL, GHKGAVWGATLNKDATKAATAAADFTAKVWDAVSGDELMT, AHKHIVKTVDFTQDSNYLLTGGQDKLLRIYDLNKPEAEPK, GHTSGIKKALWCSEDKQILSADDKTVRLWDHATMTEVKS, LNFNMSVSSMEYIPEGEILVITYGRSIAFHSAV, EAPA…ESYK, and GHFGPIHCVRFSPDGELYASGSEDGTLRLWQTVVGKTYGL. Residues Ser-312, Ser-335, and Ser-338 each carry the phosphoserine modification. The interval 326-350 is disordered; it reads AEEELEEIASENSDSIYSSTPEVKA. Polar residues predominate over residues 337 to 350; the sequence is NSDSIYSSTPEVKA. A Phosphotyrosine modification is found at Tyr-342.

Belongs to the WD repeat STRAP family. Part of the core SMN complex that contains SMN1, GEMIN2/SIP1, DDX20/GEMIN3, GEMIN4, GEMIN5, GEMIN6, GEMIN7, GEMIN8 and STRAP/UNRIP. Part of the SMN-Sm complex that contains SMN1, GEMIN2/SIP1, DDX20/GEMIN3, GEMIN4, GEMIN5, GEMIN6, GEMIN7, GEMIN8, STRAP/UNRIP and the Sm proteins SNRPB, SNRPD1, SNRPD2, SNRPD3, SNRPE, SNRPF and SNRPG. Interacts directly with GEMIN6 and GEMIN7. Associates with the SMN complex in the cytoplasm but not in the nucleus. Also interacts with CSDE1/UNR and MAWBP. Interacts with PDPK1. Interacts with TRIM48.

It is found in the cytoplasm. The protein localises to the nucleus. In terms of biological role, the SMN complex catalyzes the assembly of small nuclear ribonucleoproteins (snRNPs), the building blocks of the spliceosome, and thereby plays an important role in the splicing of cellular pre-mRNAs. Most spliceosomal snRNPs contain a common set of Sm proteins SNRPB, SNRPD1, SNRPD2, SNRPD3, SNRPE, SNRPF and SNRPG that assemble in a heptameric protein ring on the Sm site of the small nuclear RNA to form the core snRNP (Sm core). In the cytosol, the Sm proteins SNRPD1, SNRPD2, SNRPE, SNRPF and SNRPG are trapped in an inactive 6S pICln-Sm complex by the chaperone CLNS1A that controls the assembly of the core snRNP. To assemble core snRNPs, the SMN complex accepts the trapped 5Sm proteins from CLNS1A forming an intermediate. Binding of snRNA inside 5Sm triggers eviction of the SMN complex, thereby allowing binding of SNRPD3 and SNRPB to complete assembly of the core snRNP. STRAP plays a role in the cellular distribution of the SMN complex. Negatively regulates TGF-beta signaling but positively regulates the PDPK1 kinase activity by enhancing its autophosphorylation and by significantly reducing the association of PDPK1 with 14-3-3 protein. The polypeptide is Serine-threonine kinase receptor-associated protein (Strap) (Rattus norvegicus (Rat)).